We begin with the raw amino-acid sequence, 164 residues long: Respiratory growth induced protein 2 (164 aa).

It belongs to the RGI1 family.

The protein localises to the cytoplasm. In terms of biological role, involved in the control of energetic metabolism and significantly contribute to cell fitness, especially under respiratory growth conditions. This Saccharomyces cerevisiae (strain RM11-1a) (Baker's yeast) protein is Respiratory growth induced protein 2 (RGI2).